Reading from the N-terminus, the 416-residue chain is Carboxypeptidase B (416 aa).

An N-terminal signal peptide occupies residues 1-15; it reads MAFLILVTLALASAH. A propeptide spans 16 to 109 (activation peptide); that stretch reads YSGEHFEGEK…LEGQFGRQVP (94 aa). The Peptidase M14 domain maps to 117 to 411; it reads KYNRWETIEA…LAIKHLARYV (295 aa). His175 and Glu178 together coordinate Zn(2+). Residues 175 to 178, Arg233, and 250 to 251 contribute to the substrate site; these read HARE and TR. Intrachain disulfides connect Cys244-Cys267 and Cys258-Cys272. Zn(2+) is bound at residue His303. Residues 304 to 305 and Tyr355 each bind substrate; that span reads SY. The Proton donor/acceptor role is filled by Glu377.

It belongs to the peptidase M14 family. It depends on Zn(2+) as a cofactor.

The protein resides in the secreted. It localises to the zymogen granule lumen. The catalysed reaction is Preferential release of a C-terminal lysine or arginine amino acid.. This is Carboxypeptidase B (CPB1) from Canis lupus familiaris (Dog).